A 119-amino-acid polypeptide reads, in one-letter code: Acidic phospholipase A2 E (119 aa).

Disulfide bonds link cysteine 11/cysteine 71, cysteine 26/cysteine 118, cysteine 28/cysteine 44, cysteine 43/cysteine 99, cysteine 50/cysteine 92, cysteine 60/cysteine 85, and cysteine 78/cysteine 90. 3 residues coordinate Ca(2+): tyrosine 27, glycine 29, and glycine 31. Histidine 47 is an active-site residue. A Ca(2+)-binding site is contributed by aspartate 48. Aspartate 93 is an active-site residue.

The protein belongs to the phospholipase A2 family. Group I subfamily. D49 sub-subfamily. Requires Ca(2+) as cofactor. Expressed by the venom gland.

Its subcellular location is the secreted. The catalysed reaction is a 1,2-diacyl-sn-glycero-3-phosphocholine + H2O = a 1-acyl-sn-glycero-3-phosphocholine + a fatty acid + H(+). In terms of biological role, PLA2 catalyzes the calcium-dependent hydrolysis of the 2-acyl groups in 3-sn-phosphoglycerides. The sequence is that of Acidic phospholipase A2 E from Naja oxiana (Central Asian cobra).